The following is a 244-amino-acid chain: Ribosomal RNA small subunit methyltransferase G (244 aa).

Residues Gly-79, Phe-84, 102–104 (DST), 130–131 (AE), and Arg-149 contribute to the S-adenosyl-L-methionine site. A disordered region spans residues 225–244 (DRYPRREGVPNQQPLFWSAK). The segment covering 234–244 (PNQQPLFWSAK) has biased composition (polar residues).

Belongs to the methyltransferase superfamily. RNA methyltransferase RsmG family.

It is found in the cytoplasm. Specifically methylates the N7 position of a guanine in 16S rRNA. This Deinococcus deserti (strain DSM 17065 / CIP 109153 / LMG 22923 / VCD115) protein is Ribosomal RNA small subunit methyltransferase G.